The sequence spans 66 residues: Heat-stable enterotoxin (66 aa).

The first 19 residues, 1-19, serve as a signal peptide directing secretion; it reads MKKIVFVLVLMLSSFGTFG. Residues 20–50 constitute a propeptide that is removed on maturation; the sequence is QETASRQFGDAFSTPIAAEVNKKACDTELPP. 3 disulfide bridges follow: Cys-54-Cys-59, Cys-55-Cys-63, and Cys-58-Cys-66.

The protein belongs to the heat-stable enterotoxin family.

The protein resides in the secreted. Toxin which activates the particulate form of guanylate cyclase and increases cyclic GMP levels within the host intestinal epithelial cells. This Yersinia kristensenii protein is Heat-stable enterotoxin (yst).